The primary structure comprises 1872 residues: Ral GTPase-activating protein subunit alpha-2 (1872 aa).

Residues S373, S376, and S379 each carry the phosphoserine modification. Residues 446–469 show a composition bias toward basic and acidic residues; it reads DKKDVAEEDADKLGLSETDSKEVS. A disordered region spans residues 446-481; that stretch reads DKKDVAEEDADKLGLSETDSKEVSSESSGHKRSSSW. Phosphoserine occurs at positions 486 and 696. 2 disordered regions span residues 711–730 and 758–849; these read FRSATTSGAPGVEKARNTVR and QPVP…TGSD. T715 bears the Phosphothreonine; by PKB mark. Over residues 775–795 the composition is skewed to polar residues; sequence SDSSQGQKVENSQNLSSSEPK. Residues 796–810 are compositionally biased toward basic and acidic residues; that stretch reads SVQESKGHVTHEHEG. Phosphoserine occurs at positions 819 and 820. Over residues 824-843 the composition is skewed to basic and acidic residues; the sequence is LDLKEESQQTHGRCRERQKS. S1592 carries the phosphoserine modification. Positions 1634–1842 constitute a Rap-GAP domain; it reads LKNLDSRQCR…EERALYLEAI (209 aa).

As to quaternary structure, component of the heterodimeric RalGAP2 complex with RALGAPB. Heterodimerization is required for activity. Highly expressed in lung, liver, testis and thymus with lower levels in brain and heart (at protein level).

It is found in the cytoplasm. Catalytic subunit of the heterodimeric RalGAP2 complex which acts as a GTPase activator for the Ras-like small GTPases RALA and RALB. This chain is Ral GTPase-activating protein subunit alpha-2, found in Rattus norvegicus (Rat).